Consider the following 269-residue polypeptide: NAD kinase (269 aa).

Residue Asp45 is the Proton acceptor of the active site. NAD(+) is bound by residues Asp45 to Gly46, Asn122 to Glu123, Arg149, Asp151, and Ala186.

Belongs to the NAD kinase family. A divalent metal cation serves as cofactor.

It localises to the cytoplasm. It carries out the reaction NAD(+) + ATP = ADP + NADP(+) + H(+). In terms of biological role, involved in the regulation of the intracellular balance of NAD and NADP, and is a key enzyme in the biosynthesis of NADP. Catalyzes specifically the phosphorylation on 2'-hydroxyl of the adenosine moiety of NAD to yield NADP. In Staphylococcus saprophyticus subsp. saprophyticus (strain ATCC 15305 / DSM 20229 / NCIMB 8711 / NCTC 7292 / S-41), this protein is NAD kinase.